The primary structure comprises 284 residues: Ribosomal RNA small subunit methyltransferase A (284 aa).

Positions 33, 35, 60, 81, 101, and 124 each coordinate S-adenosyl-L-methionine.

It belongs to the class I-like SAM-binding methyltransferase superfamily. rRNA adenine N(6)-methyltransferase family. RsmA subfamily.

It localises to the cytoplasm. The enzyme catalyses adenosine(1518)/adenosine(1519) in 16S rRNA + 4 S-adenosyl-L-methionine = N(6)-dimethyladenosine(1518)/N(6)-dimethyladenosine(1519) in 16S rRNA + 4 S-adenosyl-L-homocysteine + 4 H(+). Its function is as follows. Specifically dimethylates two adjacent adenosines (A1518 and A1519) in the loop of a conserved hairpin near the 3'-end of 16S rRNA in the 30S particle. May play a critical role in biogenesis of 30S subunits. The polypeptide is Ribosomal RNA small subunit methyltransferase A (Chlamydia felis (strain Fe/C-56) (Chlamydophila felis)).